Reading from the N-terminus, the 263-residue chain is Ribosome maturation factor RimP (263 aa).

Residues E192–E263 form a disordered region. Basic residues predominate over residues P217–A231. Residues K232 to I257 show a composition bias toward basic and acidic residues.

It belongs to the RimP family.

The protein localises to the cytoplasm. In terms of biological role, required for maturation of 30S ribosomal subunits. The polypeptide is Ribosome maturation factor RimP (Nitrobacter hamburgensis (strain DSM 10229 / NCIMB 13809 / X14)).